The chain runs to 255 residues: Hydroxyacylglutathione hydrolase (255 aa).

Zn(2+) is bound by residues His56, His58, Asp60, His61, His114, Asp133, and His171.

This sequence belongs to the metallo-beta-lactamase superfamily. Glyoxalase II family. In terms of assembly, monomer. Zn(2+) serves as cofactor.

It catalyses the reaction an S-(2-hydroxyacyl)glutathione + H2O = a 2-hydroxy carboxylate + glutathione + H(+). It participates in secondary metabolite metabolism; methylglyoxal degradation; (R)-lactate from methylglyoxal: step 2/2. Functionally, thiolesterase that catalyzes the hydrolysis of S-D-lactoyl-glutathione to form glutathione and D-lactic acid. This is Hydroxyacylglutathione hydrolase from Bradyrhizobium sp. (strain BTAi1 / ATCC BAA-1182).